A 575-amino-acid polypeptide reads, in one-letter code: Eukaryotic translation initiation factor 3 subunit D (575 aa).

2 disordered regions span residues 36 to 66 and 103 to 177; these read PYSK…YGNR and STRT…DASV. The span at 39–59 shows a compositional bias: basic and acidic residues; the sequence is KGDKLGRMADWTEGKDRERGG. Positions 109–144 are enriched in gly residues; the sequence is FGRGGGTVFGRGRGQRGGQAQRGGRGTFQRVGGRGG. Basic and acidic residues predominate over residues 163-174; the sequence is GWRDDKPQRNRD. The tract at residues 302–316 is RNA gate; sequence NLDMVTVNENAADAP.

Belongs to the eIF-3 subunit D family. In terms of assembly, component of the eukaryotic translation initiation factor 3 (eIF-3) complex.

The protein resides in the cytoplasm. Its function is as follows. mRNA cap-binding component of the eukaryotic translation initiation factor 3 (eIF-3) complex, which is involved in protein synthesis of a specialized repertoire of mRNAs and, together with other initiation factors, stimulates binding of mRNA and methionyl-tRNAi to the 40S ribosome. The eIF-3 complex specifically targets and initiates translation of a subset of mRNAs involved in cell proliferation. In the eIF-3 complex, eif3d specifically recognizes and binds the 7-methylguanosine cap of a subset of mRNAs. This is Eukaryotic translation initiation factor 3 subunit D from Phaeosphaeria nodorum (strain SN15 / ATCC MYA-4574 / FGSC 10173) (Glume blotch fungus).